Consider the following 324-residue polypeptide: NAD(P)H-dependent D-xylose reductase xyl1 (324 aa).

The active-site Proton donor is Tyr-50. Residue His-112 participates in substrate binding. Residues 168–169 (SN), 217–226 (SSFGPTGFME), and 273–283 (KTSRPEVMAQN) contribute to the NAD(+) site.

It belongs to the aldo/keto reductase family.

It carries out the reaction an alditol + NAD(+) = an aldose + NADH + H(+). The enzyme catalyses an alditol + NADP(+) = an aldose + NADPH + H(+). The catalysed reaction is xylitol + NAD(+) = D-xylose + NADH + H(+). It catalyses the reaction xylitol + NADP(+) = D-xylose + NADPH + H(+). It participates in carbohydrate metabolism; D-xylose degradation. It functions in the pathway carbohydrate degradation; L-arabinose degradation via L-arabinitol; D-xylulose 5-phosphate from L-arabinose (fungal route): step 1/5. In terms of biological role, catalyzes the initial reaction in the xylose utilization pathway by reducing D-xylose into xylitol. Xylose is a major component of hemicelluloses such as xylan. Most fungi utilize D-xylose via three enzymatic reactions, xylose reductase (XR), xylitol dehydrogenase (XDH), and xylulokinase, to form xylulose 5-phosphate, which enters pentose phosphate pathway. Also major aldose reductase in pentose and D-galactose catabolism. Reduces the pentose L-arabinose and the hexose D-galactose to their respective polyols. Responsible for extracellular beta-galactosidase formation and cellulase induction during growth on lactose. The protein is NAD(P)H-dependent D-xylose reductase xyl1 (xyl1) of Hypocrea jecorina (Trichoderma reesei).